The sequence spans 375 residues: Alcohol dehydrogenase 1 (375 aa).

The residue at position 1 (Ser-1) is an N-acetylserine. Zn(2+) contacts are provided by Cys-46, His-67, Cys-97, Cys-100, Cys-103, Cys-111, and Cys-175. NAD(+)-binding positions include 200-205, Asp-224, Lys-229, 293-295, and Arg-370; these read GLGGVG and VGV.

The protein belongs to the zinc-containing alcohol dehydrogenase family. Class-I subfamily. Homodimer. Requires Zn(2+) as cofactor.

It localises to the cytoplasm. It carries out the reaction a primary alcohol + NAD(+) = an aldehyde + NADH + H(+). It catalyses the reaction a secondary alcohol + NAD(+) = a ketone + NADH + H(+). The chain is Alcohol dehydrogenase 1 (ADH1) from Coturnix japonica (Japanese quail).